A 511-amino-acid chain; its full sequence is Centrosomal protein CCDC61 (511 aa).

Residues 1–144 are head domain; sequence MEVGTVVQEE…PLPLPYLGKP (144 aa). A coiled-coil region spans residues 147 to 272; sequence AELQKEIRAL…RVKSLTTELA (126 aa). Disordered regions lie at residues 306–403 and 447–486; these read TRVG…SREP and RGRK…SMDT. The span at 315-335 shows a compositional bias: basic and acidic residues; sequence GSRERIEDRGRRSEERVRRAD. Positions 338–352 are enriched in polar residues; it reads GSRNCITRPSPSPTG. The segment covering 366-378 has biased composition (basic and acidic residues); that stretch reads DRQRRQKEAELKS.

Belongs to the CCDC61 family. In terms of assembly, forms homodimers (via head domain).

The protein localises to the cytoplasm. Its subcellular location is the cytoskeleton. It is found in the microtubule organizing center. It localises to the centrosome. The protein resides in the centriolar satellite. The protein localises to the cilium basal body. Its function is as follows. Microtubule-binding centrosomal protein required for centriole cohesion, independently of the centrosome-associated protein/CEP250 and rootletin/CROCC linker. In interphase, required for anchoring microtubule at the mother centriole subdistal appendages and for centrosome positioning. During mitosis, may be involved in spindle assembly and chromatin alignment by regulating the organization of spindle microtubules into a symmetrical structure. Plays a non-essential role in ciliogenesis. The protein is Centrosomal protein CCDC61 of Danio rerio (Zebrafish).